We begin with the raw amino-acid sequence, 337 residues long: PHD finger protein 11 (337 aa).

The segment at 25 to 61 (KRTCALCPEGHEWSQIYFSPSGNIVAHENCLLYSSGL) adopts a C2HC pre-PHD-type zinc-finger fold. A PHD-type zinc finger spans residues 91–143 (LKCSFCNKGGATVGCDLWFCKKSYHYVCAKKDQAILQVDGNHGTYKLFCPEHS). Disordered regions lie at residues 145-196 (EQEE…HGHT) and 301-337 (GDLDCSSSTSGSLLPPEDHQVRSQESPEVQAGSGDSL). Residues 187 to 196 (HMTEEPHGHT) show a composition bias toward basic and acidic residues. Polar residues-rich tracts occupy residues 301 to 312 (GDLDCSSSTSGS) and 323 to 337 (SQESPEVQAGSGDSL).

In terms of assembly, interacts with BRCA1 and RELA.

The protein resides in the nucleus. In terms of biological role, positive regulator of Th1-type cytokine gene expression. The protein is PHD finger protein 11 (Phf11) of Mus musculus (Mouse).